Here is a 525-residue protein sequence, read N- to C-terminus: MASLLKSLALFKRAKDKPPLAAGSGGAIRGIKHVIVVPIPGDSSITTRSRLLDRLVKMVGDPDISGPKLTGALISILSLFVESPGQLIQRITDDPDISIKLVEVVQSDKTQSGLTFASRGTSMDDEADRYFTYEEPNDGEERQSYWFENRDIQDIEIQDPEGFNMILATILAQIWILLAKAVTAPDTAAESELRRWVKYTQQRRVIGEFRLDKGWLDTVRNRVAEDLSLRRFMVALILDIKRTPGNKPRIAEMICDIDTYIVEAGLASFILTIKFGIETMYPALGLHEFAGELSTIESLMNLYQQMGELAPYMVILENSIQNKFSAGAYPLLWSYAMGIGVELENSMGGLNFGRSYFDPAYFRLGQEMVRRSAGKVSSNLASELGITEEEARLVSEIAAYTSDDRNNRTSGPKQAQVSFLRTDQGSEAQHSASKKDEARAPQVKKETRTSSKSDKHKEGTDKEPVSSSAMTLIDVDTTLEADTDPLESKKSAEALLRLQAMAGILGDSTLGNDSLRAYNDKDILN.

Positions 1–36 (MASLLKSLALFKRAKDKPPLAAGSGGAIRGIKHVIV) are homomultimerization. Positions 1–375 (MASLLKSLAL…QEMVRRSAGK (375 aa)) are RNA packaging and organization of the helical nucleocapsid. The tract at residues 1 to 403 (MASLLKSLAL…VSEIAAYTSD (403 aa)) is ncore. RNA is bound by residues Lys180, Arg195, Gln202, Tyr260, and Asn351. A homomultimerization region spans residues 373–391 (AGKVSSNLASELGITEEEA). Residues 403 to 472 (DDRNNRTSGP…EPVSSSAMTL (70 aa)) form a disordered region. The segment at 404–525 (DRNNRTSGPK…RAYNDKDILN (122 aa)) is ntail. Residues 408–431 (RTSGPKQAQVSFLRTDQGSEAQHS) show a composition bias toward polar residues. Residues 433–464 (SKKDEARAPQVKKETRTSSKSDKHKEGTDKEP) show a composition bias toward basic and acidic residues. Residues 477–505 (TTLEADTDPLESKKSAEALLRLQAMAGIL) are interaction with the phosphoprotein.

The protein belongs to the paramyxoviruses nucleocapsid family. As to quaternary structure, homomultimer; forms the nucleocapsid. Binds to viral genomic RNA. N0 interacts (via Ncore) with the phosphoprotein (via N-terminus); this interaction allows P to chaperon N0 to avoid N polymerization before encapsidation. Interacts as N-RNA template with the phosphoprotein (via C-terminus); this interaction positions the polymerase on the template. Interacts with the phosphoprotein; this interaction leads to the formation of membraneless organelles that function as viral replication factories.

It is found in the virion. Its subcellular location is the host cytoplasm. In terms of biological role, forms the helical nucleocapsid (NC) in a ratio of 1 N per 6 ribonucleotides, protecting the genome from nucleases. The nucleocapsid (NC) has a helical structure with either 12.35 or 11.64 N per turn, approximately 20 nm in diameter, with a hollow central cavity approximately 5 nm in diameter. The encapsidated genomic RNA serves as template for transcription and replication; encapsidation by N is coupled to RNA synthesis. Forms the encapsidation complex with the phosphoprotein protein P. Before encapsidation, the newly synthesized free N protein, so-called N0, is chaperoned by P. Participates, together with P, in the formation of viral factories (viroplasms), which are large inclusions in the host cytoplasm where replication takes place. The sequence is that of Nucleoprotein (N) from Rinderpest virus (strain RBOK) (RDV).